A 195-amino-acid polypeptide reads, in one-letter code: Peptidyl-tRNA hydrolase (195 aa).

Residue Y18 coordinates tRNA. H23 (proton acceptor) is an active-site residue. The tRNA site is built by F69, N71, and N117.

Belongs to the PTH family. In terms of assembly, monomer.

It localises to the cytoplasm. It carries out the reaction an N-acyl-L-alpha-aminoacyl-tRNA + H2O = an N-acyl-L-amino acid + a tRNA + H(+). Hydrolyzes ribosome-free peptidyl-tRNAs (with 1 or more amino acids incorporated), which drop off the ribosome during protein synthesis, or as a result of ribosome stalling. Its function is as follows. Catalyzes the release of premature peptidyl moieties from peptidyl-tRNA molecules trapped in stalled 50S ribosomal subunits, and thus maintains levels of free tRNAs and 50S ribosomes. The protein is Peptidyl-tRNA hydrolase of Alcanivorax borkumensis (strain ATCC 700651 / DSM 11573 / NCIMB 13689 / SK2).